The following is a 248-amino-acid chain: MWLRCLALALTLLMVSGIENNTKDVCVGNPGIPGTPGSHGLPGRDGRDGVKGDPGPPGPLGPPGGMPGHPGPNGMTGAPGVAGERGEKGEPGERGPPGLPASLDEELQTTLHDLRHQILQTMGVLSLHESLLVVGRKVFSSNAQSINFNDIQELCAGAGGQIAAPMSPEENEAVASIVKKYNTYAYLGLVESPDSGDFQYMDGAPVNYTNWYPGEPRGRGKEQCVEMYTDGQWNNKNCLQYRLAICEF.

Positions 1–17 (MWLRCLALALTLLMVSG) are cleaved as a signal peptide. Residue asparagine 20 is glycosylated (N-linked (GlcNAc...) asparagine). One can recognise a Collagen-like domain in the interval 28–100 (GNPGIPGTPG…PGERGPPGLP (73 aa)). Residues 29-103 (NPGIPGTPGS…RGPPGLPASL (75 aa)) form a disordered region. Residues proline 30, proline 33, proline 36, proline 42, proline 54, proline 57, proline 63, proline 67, and proline 70 each carry the 4-hydroxyproline modification. Over residues 42–51 (PGRDGRDGVK) the composition is skewed to basic and acidic residues. The segment covering 54–65 (PGPPGPLGPPGG) has biased composition (pro residues). Over residues 84–93 (ERGEKGEPGE) the composition is skewed to basic and acidic residues. Residues 132-248 (LVVGRKVFSS…LQYRLAICEF (117 aa)) enclose the C-type lectin domain. Intrachain disulfides connect cysteine 155-cysteine 246 and cysteine 224-cysteine 238. N-linked (GlcNAc...) asparagine glycosylation occurs at asparagine 207. Positions 215, 217, and 234 each coordinate Ca(2+).

The protein belongs to the SFTPA family. As to quaternary structure, oligomeric complex of 6 set of homotrimers.

Its subcellular location is the secreted. The protein localises to the extracellular space. The protein resides in the extracellular matrix. It is found in the surface film. Its function is as follows. In presence of calcium ions, it binds to surfactant phospholipids and contributes to lower the surface tension at the air-liquid interface in the alveoli of the mammalian lung and is essential for normal respiration. Enhances the expression of MYO18A/SP-R210 on alveolar macrophages. This is Pulmonary surfactant-associated protein A (SFTPA1) from Canis lupus familiaris (Dog).